The sequence spans 299 residues: Recombination-associated protein RdgC (299 aa).

Belongs to the RdgC family.

The protein localises to the cytoplasm. The protein resides in the nucleoid. Functionally, may be involved in recombination. The protein is Recombination-associated protein RdgC of Cupriavidus pinatubonensis (strain JMP 134 / LMG 1197) (Cupriavidus necator (strain JMP 134)).